We begin with the raw amino-acid sequence, 163 residues long: Protein EARLY RESPONSIVE TO DEHYDRATION 15 (163 aa).

The short motif at 10 to 20 is the PAM2-like element; that stretch reads TLNPDAPLFIP. The interval 118–163 is disordered; that stretch reads NGEMVKKSSGNRSPRSIVEPAKYAEKPAKWGNQRVAAAPRNIHQPR.

As to quaternary structure, interacts with PAB2, PAB4 and PAB8. Interacts with MPC. In terms of tissue distribution, expressed in cauline leaves, stems, rosette leaves, immature siliques and primary inflorescences.

Its subcellular location is the cytoplasm. Functionally, central component of stress responses that interacts with poly(A)-binding proteins. Negative regulator of abscisic acid (ABA) responses, including resistance to drought and freezing as well as stomatal closure regulation. Mediates resistance to the bacterial necrotroph pathogen Erwinia carotovora subsp. carotovora and promotes the induction of marker genes for systemic acquired resistance (SAR). The chain is Protein EARLY RESPONSIVE TO DEHYDRATION 15 (ERD15) from Arabidopsis thaliana (Mouse-ear cress).